The sequence spans 479 residues: Aspartyl/glutamyl-tRNA(Asn/Gln) amidotransferase subunit B (479 aa).

Belongs to the GatB/GatE family. GatB subfamily. As to quaternary structure, heterotrimer of A, B and C subunits.

It carries out the reaction L-glutamyl-tRNA(Gln) + L-glutamine + ATP + H2O = L-glutaminyl-tRNA(Gln) + L-glutamate + ADP + phosphate + H(+). It catalyses the reaction L-aspartyl-tRNA(Asn) + L-glutamine + ATP + H2O = L-asparaginyl-tRNA(Asn) + L-glutamate + ADP + phosphate + 2 H(+). In terms of biological role, allows the formation of correctly charged Asn-tRNA(Asn) or Gln-tRNA(Gln) through the transamidation of misacylated Asp-tRNA(Asn) or Glu-tRNA(Gln) in organisms which lack either or both of asparaginyl-tRNA or glutaminyl-tRNA synthetases. The reaction takes place in the presence of glutamine and ATP through an activated phospho-Asp-tRNA(Asn) or phospho-Glu-tRNA(Gln). The sequence is that of Aspartyl/glutamyl-tRNA(Asn/Gln) amidotransferase subunit B from Mycoplasma capricolum subsp. capricolum (strain California kid / ATCC 27343 / NCTC 10154).